The sequence spans 380 residues: L-lactate dehydrogenase (380 aa).

The FMN hydroxy acid dehydrogenase domain maps to 1 to 380; that stretch reads MIISSTTDFR…DRSILAKTDR (380 aa). Tyrosine 24 is a substrate binding site. Serine 106 and glutamine 127 together coordinate FMN. Tyrosine 129 serves as a coordination point for substrate. Threonine 155 is a binding site for FMN. Arginine 164 contributes to the substrate binding site. Lysine 251 serves as a coordination point for FMN. The active-site Proton acceptor is histidine 275. Substrate is bound at residue arginine 278. Residue 306 to 330 participates in FMN binding; sequence DGGVRSGLDVVRMLALGAKGVLLGR.

It belongs to the FMN-dependent alpha-hydroxy acid dehydrogenase family. FMN serves as cofactor.

It localises to the cell inner membrane. It catalyses the reaction (S)-lactate + A = pyruvate + AH2. Functionally, catalyzes the conversion of L-lactate to pyruvate. Is coupled to the respiratory chain. The polypeptide is L-lactate dehydrogenase (Caulobacter sp. (strain K31)).